Here is a 444-residue protein sequence, read N- to C-terminus: Tryptophan 5-hydroxylase 1 (444 aa).

In terms of domain architecture, ACT spans 19–94; the sequence is SLIFSLKNEV…NVLSVNLPDN (76 aa). Ser-58 carries the post-translational modification Phosphoserine; by PKA. Residues Tyr-235, Arg-257, and Thr-265 each coordinate L-tryptophan. Fe cation-binding residues include His-272, His-277, and Glu-317. 2 residues coordinate L-tryptophan: Ser-336 and Ile-366.

It belongs to the biopterin-dependent aromatic amino acid hydroxylase family. Homotetramer. Interacts with DNAJC12. Fe(2+) serves as cofactor. In terms of processing, ubiquitinated, leading to its degradation by the proteasome. Ubiquitinated is triggered by phosphorylation. Phosphorylated; triggering degradation by the proteasome. Seems to be less widely expressed than isoform 1.

The catalysed reaction is (6R)-L-erythro-5,6,7,8-tetrahydrobiopterin + L-tryptophan + O2 = 5-hydroxy-L-tryptophan + (4aS,6R)-4a-hydroxy-L-erythro-5,6,7,8-tetrahydrobiopterin. The protein operates within aromatic compound metabolism; serotonin biosynthesis; serotonin from L-tryptophan: step 1/2. Oxidizes L-tryptophan to 5-hydroxy-l-tryptophan in the rate-determining step of serotonin biosynthesis. This is Tryptophan 5-hydroxylase 1 (TPH1) from Homo sapiens (Human).